The primary structure comprises 327 residues: GTP 3',8-cyclase (327 aa).

Residues 21–233 (SYGRRIRKLR…AKIQQKYSLK (213 aa)) form the Radical SAM core domain. Arginine 30 lines the GTP pocket. Residues cysteine 37 and cysteine 41 each contribute to the [4Fe-4S] cluster site. Position 43 (tyrosine 43) interacts with S-adenosyl-L-methionine. [4Fe-4S] cluster is bound at residue cysteine 44. Arginine 79 serves as a coordination point for GTP. Glycine 83 contributes to the S-adenosyl-L-methionine binding site. Threonine 109 is a GTP binding site. S-adenosyl-L-methionine is bound at residue serine 133. GTP is bound at residue lysine 169. Residue methionine 203 coordinates S-adenosyl-L-methionine. Residues cysteine 265 and cysteine 268 each contribute to the [4Fe-4S] cluster site. Position 270-272 (270-272 (RWR)) interacts with GTP. Cysteine 282 contacts [4Fe-4S] cluster.

It belongs to the radical SAM superfamily. MoaA family. Monomer and homodimer. The cofactor is [4Fe-4S] cluster.

The enzyme catalyses GTP + AH2 + S-adenosyl-L-methionine = (8S)-3',8-cyclo-7,8-dihydroguanosine 5'-triphosphate + 5'-deoxyadenosine + L-methionine + A + H(+). It participates in cofactor biosynthesis; molybdopterin biosynthesis. In terms of biological role, catalyzes the cyclization of GTP to (8S)-3',8-cyclo-7,8-dihydroguanosine 5'-triphosphate. The sequence is that of GTP 3',8-cyclase from Synechocystis sp. (strain ATCC 27184 / PCC 6803 / Kazusa).